The sequence spans 343 residues: 2-alkenal reductase (NADP(+)-dependent) (343 aa).

Substrate is bound by residues Tyr55 and Tyr80. Residues 165-166 (AV), Gly186, Lys190, Tyr206, Asn230, Cys252, Tyr258, 282-284 (FLV), and Asn332 contribute to the NADP(+) site.

Belongs to the NADP-dependent oxidoreductase L4BD family. Homodimer.

The catalysed reaction is an n-alkanal + NADP(+) = an alk-2-enal + NADPH + H(+). Reduces the C=C double bonds of alpha, beta unsaturated enones, but has no activity on enones with an endocyclic C=C double-bond. Shows a high specificity for NADPH as the hybrid donor. Substrates are 1-nitrocyclohexene, 2-methylpentenal, trans-cinnamaldehyde, methyl-trans-2-methylcinnamaldehyde, trans-2-nonenal and 1-octen-3-one. Reduced activity with aplha-methyl transcinnamaldehyde, 1-cyclohexene-1-carboxaldehyde, methyl crotonate, (R)-pulegone, and dimethyl itaconate and no activity with maleimides, citral, (5R)- or (5S)-carvone, (S)-perillyl alcohol, and substituted cyclohexenones and cyclopentenones. May also act as a allyl-alcohol dehydrogenase by catalyzing the dehydrogenation of secondary allylic alcohols rather than saturated secondary alcohols. Allyl-alcohol dehydrogenase is specific for the S-stereoisomer of the alcohols. This Nicotiana tabacum (Common tobacco) protein is 2-alkenal reductase (NADP(+)-dependent) (DBR).